We begin with the raw amino-acid sequence, 361 residues long: Mitogen-activated protein kinase 1 (361 aa).

In terms of domain architecture, Protein kinase spans 28–316 (YINLAYIGEG…VEAALAHPYL (289 aa)). ATP contacts are provided by residues 34–42 (IGEGAYGMV) and Lys-57. Asp-152 (proton acceptor) is an active-site residue. A Phosphothreonine modification is found at Thr-188. The TXY signature appears at 188–190 (TEY). Tyr-190 is subject to Phosphotyrosine.

It belongs to the protein kinase superfamily. CMGC Ser/Thr protein kinase family. MAP kinase subfamily. Interacts with CDK2AP2. It depends on Mg(2+) as a cofactor. In terms of processing, dually phosphorylated on Thr-188 and Tyr-190, which activates the enzyme. As to expression, expressed in the central nervous system, kidney, liver, intestine and the hematopoietic system. Also found in heart, muscle, pancreas and lung.

The protein localises to the cytoplasm. It localises to the cytoskeleton. The protein resides in the microtubule organizing center. Its subcellular location is the centrosome. It is found in the spindle. It catalyses the reaction L-seryl-[protein] + ATP = O-phospho-L-seryl-[protein] + ADP + H(+). The catalysed reaction is L-threonyl-[protein] + ATP = O-phospho-L-threonyl-[protein] + ADP + H(+). With respect to regulation, activated by tyrosine phosphorylation during the M phase of the meiotic cell cycle. Dephosphorylated and inactivated by DUSP1. Serine/threonine kinase which acts as an essential component of the MAP kinase signal transduction pathway. Plays an important role in the MAPK/ERK cascade. Depending on the cellular context, this cascade mediates diverse biological functions such as cell growth, adhesion, survival and differentiation through the regulation of transcription, translation, cytoskeletal rearrangements. The MAPK/ERK cascade also plays a role in initiation and regulation of meiosis, mitosis, and postmitotic functions in differentiated cells by phosphorylating a number of transcription factors. Many of the substrates are localized in the nucleus, and seem to participate in the regulation of transcription upon stimulation. However, other substrates are found in the cytosol as well as in other cellular organelles, and those are responsible for processes such as translation, mitosis and apoptosis. Moreover, the MAPK/ERK cascade is also involved in the regulation of the endosomal dynamics, including lysosome processing and endosome cycling through the perinuclear recycling compartment (PNRC); as well as in the fragmentation of the Golgi apparatus during mitosis. Phosphorylates microtubule-associated protein 2 (MAP2), myelin basic protein (MBP) and Elk-1. Phosphorylates dual specificity protein phosphatase 1 (DUSP1) during meiosis, increasing its stability. Activated by M phase promoting factor (MPF). Plays a role in the spindle assembly checkpoint. The polypeptide is Mitogen-activated protein kinase 1 (mapk1) (Xenopus laevis (African clawed frog)).